Here is a 280-residue protein sequence, read N- to C-terminus: Large ribosomal subunit protein uL2 (280 aa).

The disordered stretch occupies residues 223 to 280 (VVMNPVDHPHGGGEGRTSGGRHPVTPWGKPTKGARTRNKNKASSKLIIRSRHAKKKGR). Over residues 254–280 (KGARTRNKNKASSKLIIRSRHAKKKGR) the composition is skewed to basic residues.

It belongs to the universal ribosomal protein uL2 family. Part of the 50S ribosomal subunit. Forms a bridge to the 30S subunit in the 70S ribosome.

Functionally, one of the primary rRNA binding proteins. Required for association of the 30S and 50S subunits to form the 70S ribosome, for tRNA binding and peptide bond formation. It has been suggested to have peptidyltransferase activity; this is somewhat controversial. Makes several contacts with the 16S rRNA in the 70S ribosome. The chain is Large ribosomal subunit protein uL2 from Dinoroseobacter shibae (strain DSM 16493 / NCIMB 14021 / DFL 12).